Consider the following 315-residue polypeptide: Prephenate dehydratase (315 aa).

The 187-residue stretch at R3–V189 folds into the Prephenate dehydratase domain. The ACT domain occupies S203–P280.

Homodimer.

The catalysed reaction is prephenate + H(+) = 3-phenylpyruvate + CO2 + H2O. Its pathway is amino-acid biosynthesis; L-phenylalanine biosynthesis; phenylpyruvate from prephenate: step 1/1. This is Prephenate dehydratase (pheA) from Mycobacterium marinum (strain ATCC BAA-535 / M).